Consider the following 315-residue polypeptide: Methionyl-tRNA formyltransferase (315 aa).

Position 113-116 (113-116) interacts with (6S)-5,6,7,8-tetrahydrofolate; the sequence is SLLP.

Belongs to the Fmt family.

The catalysed reaction is L-methionyl-tRNA(fMet) + (6R)-10-formyltetrahydrofolate = N-formyl-L-methionyl-tRNA(fMet) + (6S)-5,6,7,8-tetrahydrofolate + H(+). Attaches a formyl group to the free amino group of methionyl-tRNA(fMet). The formyl group appears to play a dual role in the initiator identity of N-formylmethionyl-tRNA by promoting its recognition by IF2 and preventing the misappropriation of this tRNA by the elongation apparatus. This Escherichia coli O6:K15:H31 (strain 536 / UPEC) protein is Methionyl-tRNA formyltransferase.